We begin with the raw amino-acid sequence, 73 residues long: DNA-directed RNA polymerase subunit omega (73 aa).

This sequence belongs to the RNA polymerase subunit omega family. The RNAP catalytic core consists of 2 alpha, 1 beta, 1 beta' and 1 omega subunit. When a sigma factor is associated with the core the holoenzyme is formed, which can initiate transcription.

It carries out the reaction RNA(n) + a ribonucleoside 5'-triphosphate = RNA(n+1) + diphosphate. Functionally, promotes RNA polymerase assembly. Latches the N- and C-terminal regions of the beta' subunit thereby facilitating its interaction with the beta and alpha subunits. The sequence is that of DNA-directed RNA polymerase subunit omega from Lactobacillus delbrueckii subsp. bulgaricus (strain ATCC BAA-365 / Lb-18).